We begin with the raw amino-acid sequence, 288 residues long: Phosphatidylglycerol--prolipoprotein diacylglyceryl transferase (288 aa).

4 consecutive transmembrane segments (helical) span residues 8–28, 49–69, 79–99, and 109–129; these read IGPI…FVGI, AFVA…LFNL, ILAV…GIAG, and INPL…QAIG. Residue R130 participates in a 1,2-diacyl-sn-glycero-3-phospho-(1'-sn-glycerol) binding. The next 3 helical transmembrane spans lie at 203 to 223, 232 to 252, and 259 to 279; these read PAML…WFIL, GYMW…VSFF, and FFNF…SIFF.

Belongs to the Lgt family.

It is found in the cell inner membrane. It catalyses the reaction L-cysteinyl-[prolipoprotein] + a 1,2-diacyl-sn-glycero-3-phospho-(1'-sn-glycerol) = an S-1,2-diacyl-sn-glyceryl-L-cysteinyl-[prolipoprotein] + sn-glycerol 1-phosphate + H(+). It functions in the pathway protein modification; lipoprotein biosynthesis (diacylglyceryl transfer). Functionally, catalyzes the transfer of the diacylglyceryl group from phosphatidylglycerol to the sulfhydryl group of the N-terminal cysteine of a prolipoprotein, the first step in the formation of mature lipoproteins. This chain is Phosphatidylglycerol--prolipoprotein diacylglyceryl transferase, found in Fusobacterium nucleatum subsp. nucleatum (strain ATCC 25586 / DSM 15643 / BCRC 10681 / CIP 101130 / JCM 8532 / KCTC 2640 / LMG 13131 / VPI 4355).